The primary structure comprises 449 residues: Putative tartrate transporter (449 aa).

A run of 11 helical transmembrane segments spans residues Ile-34–Phe-54, Gly-64–Phe-84, Ile-99–Gln-119, Leu-130–Phe-150, Ala-156–Ile-176, Trp-194–Leu-214, Val-259–Trp-279, Ile-292–Trp-312, Gly-336–Val-356, Leu-367–Ile-387, and Gly-414–Ala-434.

It belongs to the major facilitator superfamily. Phthalate permease family.

Its subcellular location is the cell membrane. Component of the tartrate utilization system and may allow entry of tartrate and tartrate dehydrogenase. The polypeptide is Putative tartrate transporter (ttuB) (Agrobacterium vitis (Rhizobium vitis)).